Reading from the N-terminus, the 248-residue chain is B-box zinc finger protein 24 (248 aa).

Positions 5, 8, 28, 33, 57, 60, 80, and 85 each coordinate Zn(2+). The B box-type 1; atypical zinc finger occupies 5–47 (CDVCEKAPATVICCADEAALCPQCDIEIHAANKLASKHQRLHL). Residues 57–99 (CDICQEKAAFIFCVEDRALLCRDCDESIHVANSRSANHQRFLA) form a B box-type 2; atypical zinc finger. Positions 115 to 148 (IEKNQPEPSNNQQKANQIPAKSTSQQQQQPSSAT) are disordered. The span at 120 to 130 (PEPSNNQQKAN) shows a compositional bias: polar residues. The segment covering 131-148 (QIPAKSTSQQQQQPSSAT) has biased composition (low complexity). The Nuclear localization signal signature appears at 226-229 (KKPR). The tract at residues 236-248 (DDDEEHFIVPDLG) is interaction with COP1.

As to quaternary structure, interacts with COP1 WD40 domain. Interacts with HY5 and HYH. Interacts with RCD1 and TRP4. COP1-mediated ubiquitination and subsequent proteasomal degradation of BBX24/STO occurs in the dark. In terms of tissue distribution, high expression in leaves and lower in roots and flowers.

It is found in the nucleus. Its function is as follows. Acts as a negative regulator of seedling photomorphogenesis and light-regulated inhibition of hypocotyl elongation. BBX24/STO and BBX25/STH function as transcriptional corepressors of HY5 activity, leading to the down-regulation of BBX22 expression. BBX24/STO acts additively with BBX25/STH during de-etiolation and the hypocotyl shade avoidance response. Functions as a negative regulator of photomorphogenic UV-B responses by interacting with both COP1 and HY5. May act as a transcription factor in the salt-stress response. The polypeptide is B-box zinc finger protein 24 (Arabidopsis thaliana (Mouse-ear cress)).